The primary structure comprises 228 residues: ATP-dependent dethiobiotin synthetase BioD (228 aa).

12-17 provides a ligand contact to ATP; the sequence is DVGKTY. Thr16 lines the Mg(2+) pocket. Lys37 is a catalytic residue. ATP contacts are provided by residues Asp53, 114 to 117, 174 to 175, 203 to 205, and Asn210; these read EGMG, ND, and PFI. Positions 53 and 114 each coordinate Mg(2+).

It belongs to the dethiobiotin synthetase family. In terms of assembly, homodimer. The cofactor is Mg(2+).

It localises to the cytoplasm. It catalyses the reaction (7R,8S)-7,8-diammoniononanoate + CO2 + ATP = (4R,5S)-dethiobiotin + ADP + phosphate + 3 H(+). It participates in cofactor biosynthesis; biotin biosynthesis; biotin from 7,8-diaminononanoate: step 1/2. Functionally, catalyzes a mechanistically unusual reaction, the ATP-dependent insertion of CO2 between the N7 and N8 nitrogen atoms of 7,8-diaminopelargonic acid (DAPA, also called 7,8-diammoniononanoate) to form a ureido ring. The chain is ATP-dependent dethiobiotin synthetase BioD from Nitrosopumilus maritimus (strain SCM1).